The following is a 943-amino-acid chain: Isoleucine--tRNA ligase (943 aa).

Residues 58–68 (PYANGKIHIGH) carry the 'HIGH' region motif. Position 567 (Glu567) interacts with L-isoleucyl-5'-AMP. The 'KMSKS' region signature appears at 608-612 (KMSKS). An ATP-binding site is contributed by Lys611. 4 residues coordinate Zn(2+): Cys906, Cys909, Cys926, and Cys929.

The protein belongs to the class-I aminoacyl-tRNA synthetase family. IleS type 1 subfamily. As to quaternary structure, monomer. Zn(2+) serves as cofactor.

It is found in the cytoplasm. It carries out the reaction tRNA(Ile) + L-isoleucine + ATP = L-isoleucyl-tRNA(Ile) + AMP + diphosphate. Its function is as follows. Catalyzes the attachment of isoleucine to tRNA(Ile). As IleRS can inadvertently accommodate and process structurally similar amino acids such as valine, to avoid such errors it has two additional distinct tRNA(Ile)-dependent editing activities. One activity is designated as 'pretransfer' editing and involves the hydrolysis of activated Val-AMP. The other activity is designated 'posttransfer' editing and involves deacylation of mischarged Val-tRNA(Ile). The polypeptide is Isoleucine--tRNA ligase (Pseudomonas entomophila (strain L48)).